The primary structure comprises 333 residues: Eukaryotic translation initiation factor 2 subunit 2 (333 aa).

Disordered stretches follow at residues 1-87 (MSGD…KSKK), 98-117 (IKDL…EEDL), and 141-165 (EKDE…QTGP). Serine 2 is subject to N-acetylserine. Residues serine 2 and serine 13 each carry the phosphoserine modification. Residues 13 to 22 (SKKKKKKKKP) show a composition bias toward basic residues. At threonine 36 the chain carries Phosphothreonine. Residues 40–51 (ETKEVEPEPTED) show a composition bias toward basic and acidic residues. Serine 67 bears the Phosphoserine mark. Lysine 102 is covalently cross-linked (Glycyl lysine isopeptide (Lys-Gly) (interchain with G-Cter in SUMO2)). Serine 105 carries the phosphoserine modification. The span at 106 to 117 (DVQEPAEPEEDL) shows a compositional bias: acidic residues. 2 positions are modified to phosphoserine: serine 158 and serine 218. N6-acetyllysine occurs at positions 265 and 293. A C4-type zinc finger spans residues 281 to 305 (CHTCRSPDTILQKDTRLYFLQCETC).

The protein belongs to the eIF-2-beta/eIF-5 family. As to quaternary structure, eukaryotic translation initiation factor 2 eIF2 is a heterotrimeric complex composed of an alpha (EIF2S1), a beta (EIF2S2) and a gamma (EIF2S3) chain. eIF2 is member of the 43S pre-initiation complex (43S PIC). eIF2 forms a complex with at least CELF1/CUGBP1, CALR, CALR3, EIF2S1, EIF2S2, HSP90B1 and HSPA5. Interacts with BZW2/5MP1. Interacts with EIF5.

It localises to the cytoplasm. The protein resides in the cytosol. Its function is as follows. Component of the eIF2 complex that functions in the early steps of protein synthesis by forming a ternary complex with GTP and initiator tRNA. This complex binds to a 40S ribosomal subunit, followed by mRNA binding to form a 43S pre-initiation complex (43S PIC). Junction of the 60S ribosomal subunit to form the 80S initiation complex is preceded by hydrolysis of the GTP bound to eIF2 and release of an eIF2-GDP binary complex. In order for eIF2 to recycle and catalyze another round of initiation, the GDP bound to eIF2 must exchange with GTP by way of a reaction catalyzed by eIF2B. This Bos taurus (Bovine) protein is Eukaryotic translation initiation factor 2 subunit 2 (EIF2S2).